Consider the following 163-residue polypeptide: Nucleotide-binding protein BBR47_25280 (163 aa).

It belongs to the YajQ family.

In terms of biological role, nucleotide-binding protein. The protein is Nucleotide-binding protein BBR47_25280 of Brevibacillus brevis (strain 47 / JCM 6285 / NBRC 100599).